We begin with the raw amino-acid sequence, 473 residues long: Ribulose bisphosphate carboxylase large chain (473 aa).

2 residues coordinate substrate: Asn-116 and Thr-166. Lys-168 functions as the Proton acceptor in the catalytic mechanism. A substrate-binding site is contributed by Lys-170. 3 residues coordinate Mg(2+): Lys-194, Asp-196, and Glu-197. The residue at position 194 (Lys-194) is an N6-carboxylysine. His-287 serves as the catalytic Proton acceptor. 3 residues coordinate substrate: Arg-288, His-320, and Ser-372.

This sequence belongs to the RuBisCO large chain family. Type I subfamily. Heterohexadecamer of 8 large chains and 8 small chains. Mg(2+) is required as a cofactor.

The enzyme catalyses 2 (2R)-3-phosphoglycerate + 2 H(+) = D-ribulose 1,5-bisphosphate + CO2 + H2O. The catalysed reaction is D-ribulose 1,5-bisphosphate + O2 = 2-phosphoglycolate + (2R)-3-phosphoglycerate + 2 H(+). RuBisCO catalyzes two reactions: the carboxylation of D-ribulose 1,5-bisphosphate, the primary event in carbon dioxide fixation, as well as the oxidative fragmentation of the pentose substrate. Both reactions occur simultaneously and in competition at the same active site. The polypeptide is Ribulose bisphosphate carboxylase large chain (Nitrobacter winogradskyi (Nitrobacter agilis)).